The following is a 792-amino-acid chain: Kinesin-associated protein 3 (792 aa).

The residue at position 60 (S60) is a Phosphoserine. The segment covering 103-119 has biased composition (basic and acidic residues); it reads LSGKEKKEKSSKPKDPP. The segment at 103-124 is disordered; it reads LSGKEKKEKSSKPKDPPPFEGM. 5 ARM repeats span residues 333 to 373, 374 to 412, 494 to 533, 578 to 620, and 621 to 662; these read FMEN…NLSF, DTGL…HISM, DGPT…NLTI, DDSC…QMVF, and HQAT…IIAE.

Heterotrimer of KIFAP3, KIF3A and KIF3B. Interacts with RAP1GDS1/SMG GDS. Interacts with SMC3 subunit of the cohesin complex. Post-translationally, phosphorylated on tyrosine residues by SRC in vitro; this reduces the binding affinity of the protein for RAP1GDS1.

In terms of biological role, involved in tethering the chromosomes to the spindle pole and in chromosome movement. Binds to the tail domain of the KIF3A/KIF3B heterodimer to form a heterotrimeric KIF3 complex and may regulate the membrane binding of this complex. This Homo sapiens (Human) protein is Kinesin-associated protein 3 (KIFAP3).